The primary structure comprises 739 residues: Phosphoribosylformylglycinamidine synthase subunit PurL (739 aa).

His53 is an active-site residue. Residues Tyr56 and Lys95 each contribute to the ATP site. Glu97 is a Mg(2+) binding site. Residues 98-101 (SHNH) and Arg120 each bind substrate. The Proton acceptor role is filled by His99. Mg(2+) is bound at residue Asp121. A substrate-binding site is contributed by Gln244. Asp274 contacts Mg(2+). 318-320 (ESQ) is a substrate binding site. Asp501 and Gly538 together coordinate ATP. Asn539 lines the Mg(2+) pocket. Substrate is bound at residue Ser541.

The protein belongs to the FGAMS family. Monomer. Part of the FGAM synthase complex composed of 1 PurL, 1 PurQ and 2 PurS subunits.

It localises to the cytoplasm. It carries out the reaction N(2)-formyl-N(1)-(5-phospho-beta-D-ribosyl)glycinamide + L-glutamine + ATP + H2O = 2-formamido-N(1)-(5-O-phospho-beta-D-ribosyl)acetamidine + L-glutamate + ADP + phosphate + H(+). It participates in purine metabolism; IMP biosynthesis via de novo pathway; 5-amino-1-(5-phospho-D-ribosyl)imidazole from N(2)-formyl-N(1)-(5-phospho-D-ribosyl)glycinamide: step 1/2. In terms of biological role, part of the phosphoribosylformylglycinamidine synthase complex involved in the purines biosynthetic pathway. Catalyzes the ATP-dependent conversion of formylglycinamide ribonucleotide (FGAR) and glutamine to yield formylglycinamidine ribonucleotide (FGAM) and glutamate. The FGAM synthase complex is composed of three subunits. PurQ produces an ammonia molecule by converting glutamine to glutamate. PurL transfers the ammonia molecule to FGAR to form FGAM in an ATP-dependent manner. PurS interacts with PurQ and PurL and is thought to assist in the transfer of the ammonia molecule from PurQ to PurL. In Listeria monocytogenes serotype 4b (strain CLIP80459), this protein is Phosphoribosylformylglycinamidine synthase subunit PurL.